The primary structure comprises 322 residues: MDSDFVPPSVSFQLPVIDFSDQNLKPGSSKWDEVTADVLKALEDYGCFEASFDKLSVELNRSVFEAMEDLFELPIPTKQRNVSSKPFHGYLCHNLYESLGINDANVLEKVNDFTQQLWPDHGNKSISETIHLFSEQLVELDLMVRRMIMESFGIENYIDEHLNSTYYLTRLMKYTSPPDDDDDDDEETKLGLRSHTDKNIITILHQYQVDGLEVKTKDDKWIKVKPSQDSVLVMVGDSLCALLNGRLHSPYHRVIMTGKKTRYSTGLFSIPKTGVIIDSPEELVDKEHPRIFKPFEYTDFLHFFQTEAGRIAQSALHAFAAF.

A Fe2OG dioxygenase domain is found at 165-271 (TYYLTRLMKY…RYSTGLFSIP (107 aa)). The Fe cation site is built by H195, D197, and H252. R262 provides a ligand contact to 2-oxoglutarate.

The protein belongs to the iron/ascorbate-dependent oxidoreductase family. The cofactor is Fe(2+).

Probable 2-oxoglutarate-dependent dioxygenase that may be involved in glucosinolates biosynthesis. May play a role in the production of aliphatic glucosinolates. In Arabidopsis thaliana (Mouse-ear cress), this protein is Probable 2-oxoglutarate-dependent dioxygenase AOP1 (AOP1).